Here is a 162-residue protein sequence, read N- to C-terminus: Putative 4-hydroxy-4-methyl-2-oxoglutarate aldolase (162 aa).

Residues 75-78 and arginine 97 each bind substrate; that span reads GDML. Aspartate 98 serves as a coordination point for a divalent metal cation.

Belongs to the class II aldolase/RraA-like family. As to quaternary structure, homotrimer. A divalent metal cation is required as a cofactor.

It carries out the reaction 4-hydroxy-4-methyl-2-oxoglutarate = 2 pyruvate. It catalyses the reaction oxaloacetate + H(+) = pyruvate + CO2. In terms of biological role, catalyzes the aldol cleavage of 4-hydroxy-4-methyl-2-oxoglutarate (HMG) into 2 molecules of pyruvate. Also contains a secondary oxaloacetate (OAA) decarboxylase activity due to the common pyruvate enolate transition state formed following C-C bond cleavage in the retro-aldol and decarboxylation reactions. This chain is Putative 4-hydroxy-4-methyl-2-oxoglutarate aldolase, found in Ectopseudomonas mendocina (strain ymp) (Pseudomonas mendocina).